The chain runs to 214 residues: Leucyl/phenylalanyl-tRNA--protein transferase (214 aa).

This sequence belongs to the L/F-transferase family.

Its subcellular location is the cytoplasm. The catalysed reaction is N-terminal L-lysyl-[protein] + L-leucyl-tRNA(Leu) = N-terminal L-leucyl-L-lysyl-[protein] + tRNA(Leu) + H(+). The enzyme catalyses N-terminal L-arginyl-[protein] + L-leucyl-tRNA(Leu) = N-terminal L-leucyl-L-arginyl-[protein] + tRNA(Leu) + H(+). It catalyses the reaction L-phenylalanyl-tRNA(Phe) + an N-terminal L-alpha-aminoacyl-[protein] = an N-terminal L-phenylalanyl-L-alpha-aminoacyl-[protein] + tRNA(Phe). In terms of biological role, functions in the N-end rule pathway of protein degradation where it conjugates Leu, Phe and, less efficiently, Met from aminoacyl-tRNAs to the N-termini of proteins containing an N-terminal arginine or lysine. This chain is Leucyl/phenylalanyl-tRNA--protein transferase, found in Cereibacter sphaeroides (strain ATCC 17029 / ATH 2.4.9) (Rhodobacter sphaeroides).